A 153-amino-acid chain; its full sequence is Peptidyl-prolyl cis-trans isomerase FKBP15-1 (153 aa).

The first 25 residues, 1-25 (MMSSASAMKAVGFLLLLTILTLAYA), serve as a signal peptide directing secretion. The region spanning 52 to 140 (GDKIKVHYRG…IFDTELVAVN (89 aa)) is the PPIase FKBP-type domain. A Prevents secretion from ER motif is present at residues 150 to 153 (KNEL).

Belongs to the FKBP-type PPIase family.

It is found in the endoplasmic reticulum lumen. It catalyses the reaction [protein]-peptidylproline (omega=180) = [protein]-peptidylproline (omega=0). Its function is as follows. PPIases accelerate the folding of proteins. It catalyzes the cis-trans isomerization of proline imidic peptide bonds in oligopeptides. This is Peptidyl-prolyl cis-trans isomerase FKBP15-1 (FKBP15-1) from Arabidopsis thaliana (Mouse-ear cress).